Consider the following 86-residue polypeptide: U15-lycotoxin-Ls1d (86 aa).

Residues 1–20 form the signal peptide; it reads MNSKIFAVLLLLALLSCVLS. The WAP domain maps to 21 to 66; it reads DQYCPKSSITACKKMNIRNDCCKDDDCTGGSWCCATPCGNFCKYPT. 5 cysteine pairs are disulfide-bonded: Cys-24–Cys-54, Cys-32–Cys-58, Cys-41–Cys-53, Cys-42–Cys-80, and Cys-47–Cys-62.

Belongs to the venom protein 11 family. 01 (wap-1) subfamily. In terms of processing, contains 5 disulfide bonds. As to expression, expressed by the venom gland.

The protein resides in the secreted. Functionally, has antibacterial activity. The sequence is that of U15-lycotoxin-Ls1d from Lycosa singoriensis (Wolf spider).